Reading from the N-terminus, the 129-residue chain is Large ribosomal subunit protein bL21 (129 aa).

The protein belongs to the bacterial ribosomal protein bL21 family. As to quaternary structure, part of the 50S ribosomal subunit. Contacts protein L20.

Its function is as follows. This protein binds to 23S rRNA in the presence of protein L20. The polypeptide is Large ribosomal subunit protein bL21 (Prochlorococcus marinus (strain MIT 9313)).